The primary structure comprises 609 residues: D-apionate lactonase (609 aa).

The enzyme catalyses D-apionolactone + H2O = D-apionate + H(+). The protein operates within carbohydrate metabolism. Its function is as follows. Involved in catabolism of D-apiose. Hydrolyzes D-apionolactone to D-apionate. The sequence is that of D-apionate lactonase from Brucella anthropi (strain ATCC 49188 / DSM 6882 / CCUG 24695 / JCM 21032 / LMG 3331 / NBRC 15819 / NCTC 12168 / Alc 37) (Ochrobactrum anthropi).